The sequence spans 148 residues: Large ribosomal subunit protein bL9 (148 aa).

This sequence belongs to the bacterial ribosomal protein bL9 family.

Binds to the 23S rRNA. This is Large ribosomal subunit protein bL9 from Caldicellulosiruptor saccharolyticus (strain ATCC 43494 / DSM 8903 / Tp8T 6331).